A 427-amino-acid polypeptide reads, in one-letter code: Ribose-phosphate pyrophosphokinase 1 (427 aa).

Mg(2+)-binding residues include aspartate 128, histidine 130, and aspartate 143. 4 positions are modified to phosphoserine: serine 199, serine 218, serine 271, and serine 295.

It belongs to the ribose-phosphate pyrophosphokinase family.

Its subcellular location is the cytoplasm. It carries out the reaction D-ribose 5-phosphate + ATP = 5-phospho-alpha-D-ribose 1-diphosphate + AMP + H(+). It functions in the pathway metabolic intermediate biosynthesis; 5-phospho-alpha-D-ribose 1-diphosphate biosynthesis; 5-phospho-alpha-D-ribose 1-diphosphate from D-ribose 5-phosphate (route I): step 1/1. Its function is as follows. 5-phosphoribose 1-diphosphate synthase involved in nucleotide, histidine, and tryptophan biosynthesis. Active in heteromultimeric complexes with other 5-phosphoribose 1-diphosphate synthases (PRS2, PRS3, PRS4 and PRS5). This chain is Ribose-phosphate pyrophosphokinase 1 (PRS1), found in Saccharomyces cerevisiae (strain ATCC 204508 / S288c) (Baker's yeast).